Reading from the N-terminus, the 278-residue chain is uncharacterized protein (278 aa).

Residues 112–113, 191–193, and aspartate 217 contribute to the NAD(+) site; these read HI and VGR. Arginine 193 is an active-site residue. Residue glutamate 222 is part of the active site. The Proton donor role is filled by histidine 241. 241–244 is an NAD(+) binding site; that stretch reads HSAG.

This sequence belongs to the D-isomer specific 2-hydroxyacid dehydrogenase family.

This is an uncharacterized protein from Streptomyces coelicolor.